Here is a 289-residue protein sequence, read N- to C-terminus: Acetyl-coenzyme A carboxylase carboxyl transferase subunit beta (289 aa).

A CoA carboxyltransferase N-terminal domain is found at 28-289; the sequence is VMTKCPKCKK…QGGEMAVWQS (262 aa). Positions 32, 35, 51, and 54 each coordinate Zn(2+). Residues 32-54 form a C4-type zinc finger; sequence CPKCKKIMYTKEVLKNLKVCVNC.

It belongs to the AccD/PCCB family. Acetyl-CoA carboxylase is a heterohexamer composed of biotin carboxyl carrier protein (AccB), biotin carboxylase (AccC) and two subunits each of ACCase subunit alpha (AccA) and ACCase subunit beta (AccD). It depends on Zn(2+) as a cofactor.

Its subcellular location is the cytoplasm. It carries out the reaction N(6)-carboxybiotinyl-L-lysyl-[protein] + acetyl-CoA = N(6)-biotinyl-L-lysyl-[protein] + malonyl-CoA. It participates in lipid metabolism; malonyl-CoA biosynthesis; malonyl-CoA from acetyl-CoA: step 1/1. In terms of biological role, component of the acetyl coenzyme A carboxylase (ACC) complex. Biotin carboxylase (BC) catalyzes the carboxylation of biotin on its carrier protein (BCCP) and then the CO(2) group is transferred by the transcarboxylase to acetyl-CoA to form malonyl-CoA. The polypeptide is Acetyl-coenzyme A carboxylase carboxyl transferase subunit beta (Bacillus anthracis (strain A0248)).